Reading from the N-terminus, the 121-residue chain is MAMNLLNTASIAKEMQTKVTERMGDWFEAEFKAKANSASRRTRLIRSHGHTYTYARYQNTGQLSSNLKQVKKGDKIVIDAGTRANYTSGYHGMYFLVEKKGMQEVKTTLKKGANYANSMKL.

This sequence belongs to the Skunalikevirus tail terminator protein family. In terms of assembly, homohexamer. Interacts with the tail tube protein.

The protein localises to the virion. Functionally, plays an essential role in tail assembly by capping the rapidly polymerizing tail once it has reached its requisite length and serving as the interaction surface for the connector and the tail tube proteins. The protein is Probable tail terminator protein of Lactococcus lactis (Lactococcus lactis bacteriophage p2).